Here is a 466-residue protein sequence, read N- to C-terminus: Teichoic acids export ATP-binding protein TagH (466 aa).

In terms of domain architecture, ABC transporter spans 27–249 (NKAKSLIGSN…YEKFVQWFKK (223 aa)). 63–70 (GLNGAGKS) is an ATP binding site. The tract at residues 250–466 (LPKKEQEKFK…TTEQSDGANQ (217 aa)) is unknown. 2 disordered regions span residues 356 to 403 (NMTS…SNQN) and 439 to 466 (IHPGQEINLPEPTTSANSTTEQSDGANQ). Residues 373-384 (PKKKVSQAKKTT) are compositionally biased toward basic residues. The span at 385-403 (KVSSTQKNTSSSSSTSNQN) shows a compositional bias: low complexity. The region spanning 403–447 (NTYIVQAGDSLSIIAENHGYSVEEIQQVNPGVDFSVIHPGQEINL) is the LysM domain. The segment covering 449 to 466 (EPTTSANSTTEQSDGANQ) has biased composition (polar residues).

Belongs to the ABC transporter superfamily. Teichoic acids exporter (TC 3.A.1.104.1) family. In terms of assembly, the complex is composed of two ATP-binding proteins (TagH) and two transmembrane proteins (TagG).

The protein resides in the cell membrane. It carries out the reaction ATP + H2O + teichoic acidSide 1 = ADP + phosphate + teichoic acidSide 2.. Part of the ABC transporter complex TagGH involved in teichoic acids export. Responsible for energy coupling to the transport system. This chain is Teichoic acids export ATP-binding protein TagH, found in Lactococcus lactis subsp. lactis (strain IL1403) (Streptococcus lactis).